Consider the following 52-residue polypeptide: Alpha-crystallin B chain (52 aa).

Belongs to the small heat shock protein (HSP20) family. As to quaternary structure, homodimer. Aggregates with homologous proteins, including alpha-A-crystallin and the small heat shock protein HSPB1, to form large heteromeric complexes.

May contribute to the transparency and refractive index of the lens. The sequence is that of Alpha-crystallin B chain (CRYAB) from Turdus merula (Common blackbird).